The sequence spans 464 residues: L-cystine uptake protein TcyP (464 aa).

The next 10 helical transmembrane spans lie at 3-23 (TLLV…LYYM), 34-54 (VFTA…IYEP), 73-93 (YVKL…ISAF), 107-127 (GLII…GIAA), 184-204 (PTST…FIGV), 225-245 (IVMR…LALM), 263-283 (FVLA…LLIA), 347-367 (AGIY…IDPL), 371-391 (FILT…GVGG), and 395-415 (FAAL…ALVI).

The protein belongs to the dicarboxylate/amino acid:cation symporter (DAACS) (TC 2.A.23) family.

The protein resides in the membrane. Functionally, mediates uptake of L-cystine, the oxidized form of L-cysteine. This is L-cystine uptake protein TcyP from Bacillus cereus (strain ATCC 14579 / DSM 31 / CCUG 7414 / JCM 2152 / NBRC 15305 / NCIMB 9373 / NCTC 2599 / NRRL B-3711).